Reading from the N-terminus, the 489-residue chain is Glutamate--tRNA ligase (489 aa).

Positions 11–21 (PSPTGHLHIGN) match the 'HIGH' region motif. A 'KMSKS' region motif is present at residues 252-256 (KLSKR). ATP is bound at residue K255.

This sequence belongs to the class-I aminoacyl-tRNA synthetase family. Glutamate--tRNA ligase type 1 subfamily. As to quaternary structure, monomer.

Its subcellular location is the cytoplasm. It catalyses the reaction tRNA(Glu) + L-glutamate + ATP = L-glutamyl-tRNA(Glu) + AMP + diphosphate. In terms of biological role, catalyzes the attachment of glutamate to tRNA(Glu) in a two-step reaction: glutamate is first activated by ATP to form Glu-AMP and then transferred to the acceptor end of tRNA(Glu). The protein is Glutamate--tRNA ligase of Oceanobacillus iheyensis (strain DSM 14371 / CIP 107618 / JCM 11309 / KCTC 3954 / HTE831).